The following is a 326-amino-acid chain: 4-hydroxythreonine-4-phosphate dehydrogenase (326 aa).

Residue Thr132 coordinates substrate. A divalent metal cation-binding residues include His160, His205, and His260. Substrate contacts are provided by Lys268, Asn277, and Arg286.

Belongs to the PdxA family. In terms of assembly, homodimer. Zn(2+) serves as cofactor. Requires Mg(2+) as cofactor. It depends on Co(2+) as a cofactor.

It localises to the cytoplasm. The catalysed reaction is 4-(phosphooxy)-L-threonine + NAD(+) = 3-amino-2-oxopropyl phosphate + CO2 + NADH. It participates in cofactor biosynthesis; pyridoxine 5'-phosphate biosynthesis; pyridoxine 5'-phosphate from D-erythrose 4-phosphate: step 4/5. Functionally, catalyzes the NAD(P)-dependent oxidation of 4-(phosphooxy)-L-threonine (HTP) into 2-amino-3-oxo-4-(phosphooxy)butyric acid which spontaneously decarboxylates to form 3-amino-2-oxopropyl phosphate (AHAP). The chain is 4-hydroxythreonine-4-phosphate dehydrogenase from Stenotrophomonas maltophilia (strain K279a).